The sequence spans 50 residues: Fungus-induced protein 3 (50 aa).

The chain is Fungus-induced protein 3 (fip-3) from Caenorhabditis elegans.